Reading from the N-terminus, the 162-residue chain is MQKEPMLEETYRKLSEELEQLKSVERGVIAKVIDEARELGDLKENAEYHAAKDKQGLMEARIAELTDVVGRAQVVDPSTFSHDRVSFGSTVVLVDQDTDEEVRYTIVGGQESNPQSGLISIQSPMARVLIGKEEGDEVELTLPSGKKTYDIEEILYEEITLG.

Positions 1–28 (MQKEPMLEETYRKLSEELEQLKSVERGV) form a coiled coil.

Belongs to the GreA/GreB family.

Functionally, necessary for efficient RNA polymerase transcription elongation past template-encoded arresting sites. The arresting sites in DNA have the property of trapping a certain fraction of elongating RNA polymerases that pass through, resulting in locked ternary complexes. Cleavage of the nascent transcript by cleavage factors such as GreA or GreB allows the resumption of elongation from the new 3'terminus. GreA releases sequences of 2 to 3 nucleotides. This Sulfurovum sp. (strain NBC37-1) protein is Transcription elongation factor GreA.